Consider the following 302-residue polypeptide: HTH-type transcriptional regulator AbgR (302 aa).

Positions 5–62 (VKIHQIRAFVEVARQGSIRGASRMLNMSQPALSKSIQELEEGLAAQLFFRRSKGVTLT) constitute an HTH lysR-type domain. The segment at residues 22-41 (IRGASRMLNMSQPALSKSIQ) is a DNA-binding region (H-T-H motif).

This sequence belongs to the LysR transcriptional regulatory family.

Could be the regulator of the abg operon. The polypeptide is HTH-type transcriptional regulator AbgR (abgR) (Escherichia coli (strain K12)).